We begin with the raw amino-acid sequence, 247 residues long: E3 ubiquitin-protein ligase RNF182 (247 aa).

An RING-type zinc finger spans residues 20–68 (CKICYNRYNLKQRKPKVLECCHRVCAKCLYKIIDFGDSPQGVIVCPFCR). 2 helical membrane passes run 184 to 204 (VLVWLLGLLYFSSLPLGIYLL) and 211 to 231 (LGVVFVSLVPSSLVILMVYGF).

As to quaternary structure, interacts with ATP6V0C.

The protein localises to the membrane. It localises to the cytoplasm. It carries out the reaction S-ubiquitinyl-[E2 ubiquitin-conjugating enzyme]-L-cysteine + [acceptor protein]-L-lysine = [E2 ubiquitin-conjugating enzyme]-L-cysteine + N(6)-ubiquitinyl-[acceptor protein]-L-lysine.. Its pathway is protein modification; protein ubiquitination. Functionally, E3 ubiquitin-protein ligase that mediates the ubiquitination of ATP6V0C and targets it to degradation via the ubiquitin-proteasome pathway. Also plays a role in the inhibition of TLR-triggered innate immune response by mediating 'Lys'-48-linked ubiquitination and subsequent degradation of NF-kappa-B component RELA. The sequence is that of E3 ubiquitin-protein ligase RNF182 (RNF182) from Ailuropoda melanoleuca (Giant panda).